Reading from the N-terminus, the 496-residue chain is ADP-dependent glucokinase (496 aa).

The signal sequence occupies residues 1-22 (MALWRGSACAGFLALAVGCVFL). Positions 52-496 (SPESRLAAAW…GLFYSEARPD (445 aa)) constitute an ADPK domain. Residues E297, E328, and D481 each contribute to the Mg(2+) site. The Proton acceptor role is filled by D481.

It belongs to the ADP-dependent glucokinase family. As to quaternary structure, monomer. Requires Mg(2+) as cofactor.

It localises to the secreted. The enzyme catalyses D-glucose + ADP = D-glucose 6-phosphate + AMP + H(+). Its pathway is carbohydrate degradation; glycolysis. Functionally, catalyzes the phosphorylation of D-glucose to D-glucose 6-phosphate using ADP as the phosphate donor. GDP and CDP can replace ADP, but with reduced efficiency. The protein is ADP-dependent glucokinase (Adpgk) of Mus musculus (Mouse).